The chain runs to 38 residues: Large ribosomal subunit protein bL36 (38 aa).

It belongs to the bacterial ribosomal protein bL36 family.

This chain is Large ribosomal subunit protein bL36, found in Hamiltonella defensa subsp. Acyrthosiphon pisum (strain 5AT).